The sequence spans 759 residues: ARF GTPase-activating protein GIT2 (759 aa).

In terms of domain architecture, Arf-GAP spans 1–124; sequence MSKRLRSNDV…AFVHRLPCRD (124 aa). The segment at 11–34 adopts a C4-type zinc-finger fold; that stretch reads CADCSGPDPSWASVNRGTLICDEC. 3 ANK repeats span residues 132-161, 166-198, and 199-228; these read DLSK…QANF, KGST…THDS, and SGKT…ELTD. 2 disordered regions span residues 376–422 and 469–641; these read VSNQ…DLSD and QSEN…PSTE. Positions 385–402 are enriched in acidic residues; it reads QDNDQPDYDSVASDEDTD. Residues 451-478 adopt a coiled-coil conformation; it reads NNNLSGELRIMQKKLQTLQSENSSLRRQ. Over residues 469–489 the composition is skewed to polar residues; the sequence is QSENSSLRRQATASACQVQTA. The segment covering 555-569 has biased composition (low complexity); sequence TSSSSLPSFPSTLSW. A compositionally biased stretch (basic and acidic residues) spans 570–583; it reads SRDESTRRASRLEK.

In terms of assembly, may form heterooligomers with GIT1. Directly interacts with protein Piccolo/PCLO. Interacts with PPFIA1 and PPFIA2. Interacts with ARHGEF7. Identified in a complex with ARHGEF6 and BIN2. Interacts with PAK3. Interacts with PXN/paxillin. Interacts with TGFB1I1. Forms a complex with EFNB1 and GRB4/NCK2.

GTPase-activating protein for ADP ribosylation factor family members, including ARF1. The polypeptide is ARF GTPase-activating protein GIT2 (Git2) (Rattus norvegicus (Rat)).